The primary structure comprises 215 residues: MKHFFITILLFCSVVSAARNGIDINSPVSTSTFTCIKNAGFSFIIPRIYHSSGSVDTVGVQNVKNARAAGLTDVDGYIFPCLKSTCASAANQVKASLDAVKAAGTKISTLWLDIERLNWPADHASNRAFIEAMVSEAKAYGQQVGIYSNYYNWQDIVGLDYHGQSSLMLWWPAYDGVKDFSKYAPFGGWSKPTIHQWSDTTTGPCGVSVDMNYIP.

Residues 1–17 (MKHFFITILLFCSVVSA) form the signal peptide. Positions 18–215 (ARNGIDINSP…GVSVDMNYIP (198 aa)) constitute a Ch-type lysozyme domain. Active-site residues include Asp-23, Asp-113, and Glu-115.

This sequence belongs to the glycosyl hydrolase 25 family.

In terms of biological role, plays a role in resistance to Gram-positive bacteria S.aureus or B.thuringiensis infection. In Caenorhabditis elegans, this protein is Lysozyme-like protein 5.